A 586-amino-acid chain; its full sequence is Assimilatory ferredoxin-dependent nitrite reductase (586 aa).

[4Fe-4S] cluster contacts are provided by C411, C417, C455, and C459. C459 contributes to the siroheme binding site. Residues 566 to 586 (SWYPFADEDEPPKTEQPMTSD) are disordered.

This sequence belongs to the nitrite and sulfite reductase 4Fe-4S domain family. In terms of assembly, monomer. Siroheme serves as cofactor. Requires [4Fe-4S] cluster as cofactor.

The catalysed reaction is 6 oxidized [2Fe-2S]-[ferredoxin] + NH4(+) + 2 H2O = nitrite + 6 reduced [2Fe-2S]-[ferredoxin] + 8 H(+). It participates in nitrogen metabolism; nitrate reduction (assimilation). Its activity is regulated as follows. Inhibited by cyanide and azide. Its function is as follows. Catalyzes the reduction of nitrite to ammonium in the nitrate assimilation pathway, using ferredoxin as the electron donor. Can use reduced methyl viologen but neither NADPH nor NADH as electron donors. This chain is Assimilatory ferredoxin-dependent nitrite reductase, found in Haloferax mediterranei (strain ATCC 33500 / DSM 1411 / JCM 8866 / NBRC 14739 / NCIMB 2177 / R-4) (Halobacterium mediterranei).